Consider the following 127-residue polypeptide: Histone H2A (127 aa).

A compositionally biased stretch (basic residues) spans 1–20; sequence MSGRGKGGKAKTGGKAKSRS. The interval 1 to 23 is disordered; sequence MSGRGKGGKAKTGGKAKSRSSRA. At Ser2 the chain carries N-acetylserine. At Ser2 the chain carries Phosphoserine. An N6-acetyllysine; partial mark is found at Lys6, Lys9, and Lys11. Gln106 carries the post-translational modification N5-methylglutamine. A Glycyl lysine isopeptide (Lys-Gly) (interchain with G-Cter in ubiquitin) cross-link involves residue Lys121.

This sequence belongs to the histone H2A family. In terms of assembly, the nucleosome is a histone octamer containing two molecules each of H2A, H2B, H3 and H4 assembled in one H3-H4 heterotetramer and two H2A-H2B heterodimers. The octamer wraps approximately 147 bp of DNA. Monoubiquitination of Lys-121 gives a specific tag for epigenetic transcriptional repression. Post-translationally, phosphorylation on Ser-2 is enhanced during mitosis. Phosphorylation on Ser-2 directly represses transcription.

Its subcellular location is the nucleus. The protein localises to the chromosome. Core component of nucleosome. Nucleosomes wrap and compact DNA into chromatin, limiting DNA accessibility to the cellular machineries which require DNA as a template. Histones thereby play a central role in transcription regulation, DNA repair, DNA replication and chromosomal stability. DNA accessibility is regulated via a complex set of post-translational modifications of histones, also called histone code, and nucleosome remodeling. This is Histone H2A (his-3) from Caenorhabditis elegans.